A 251-amino-acid polypeptide reads, in one-letter code: Phosphate import ATP-binding protein PstB (251 aa).

Residues 5-246 form the ABC transporter domain; it reads FDIRNFSVYY…PEKELTEKYL (242 aa). Residue 37–44 coordinates ATP; it reads GPSGCGKS.

The protein belongs to the ABC transporter superfamily. Phosphate importer (TC 3.A.1.7) family. The complex is composed of two ATP-binding proteins (PstB), two transmembrane proteins (PstC and PstA) and a solute-binding protein (PstS).

Its subcellular location is the cell membrane. The enzyme catalyses phosphate(out) + ATP + H2O = ADP + 2 phosphate(in) + H(+). Functionally, part of the ABC transporter complex PstSACB involved in phosphate import. Responsible for energy coupling to the transport system. This is Phosphate import ATP-binding protein PstB from Archaeoglobus fulgidus (strain ATCC 49558 / DSM 4304 / JCM 9628 / NBRC 100126 / VC-16).